The chain runs to 176 residues: Pituitary adenylate cyclase-activating polypeptide (176 aa).

A signal peptide spans 1–24; the sequence is MTMCSGARLALLVYGILMHSSVYG. Positions 25–80 are excised as a propeptide; sequence SPAASGLRFPGIRPENEAYDEDGNPQQDFYDSEPPGVGSPASALRDAYALYYPAEE. Disordered regions lie at residues 36–62 and 115–134; these read IRPE…PGVG and GTPG…RHSD. Residues 150-158 form an important for receptor binding region; that stretch reads VKKYLAAVL. Leu-158 is subject to Leucine amide. At Lys-169 the chain carries Lysine amide. Positions 173-176 are excised as a propeptide; it reads IPYL.

The protein belongs to the glucagon family.

It is found in the secreted. Functionally, PACAP is a neuropeptide involved in diverse array of physiological processes through activating the PACAP subfamily of class B1 G protein-coupled receptors: VIP receptor 1 (VIPR1), VIP receptor 2 (VIPR2), and PACAP type I receptor (ADCYAP1R1). Exerts neuroprotective and general cytoprotective effects due to anti-apoptotic, anti-inflammatory, and antioxidant actions. Promotes neuron projection development through the RAPGEF2/Rap1/B-Raf/ERK pathway. In chromaffin cells, induces long-lasting increase of intracellular calcium concentrations and neuroendocrine secretion. Involved in the control of glucose homeostasis, induces insulin secretion by pancreatic beta cells. PACAP exists in two bioactive forms from proteolysis of the same precursor protein, PACAP27 and PACAP38, which differ by eleven amino acid residues in the C-terminus. The protein is Pituitary adenylate cyclase-activating polypeptide (ADCYAP1) of Ovis aries (Sheep).